The primary structure comprises 95 residues: MRNYEVMYIIKPEVEEEKVTALMEKFKSVVEEKGAEVTKLDKWGKRRLAYEINKIKEGIYVLMQFKAEPAASAELDRVMKINDDIVRHMIIREGE.

Belongs to the bacterial ribosomal protein bS6 family.

In terms of biological role, binds together with bS18 to 16S ribosomal RNA. In Desulforamulus reducens (strain ATCC BAA-1160 / DSM 100696 / MI-1) (Desulfotomaculum reducens), this protein is Small ribosomal subunit protein bS6.